An 868-amino-acid chain; its full sequence is Monofunctional pimaradiene synthase (868 aa).

Mg(2+) contacts are provided by Asp620, Asp624, Asn764, Thr768, and Glu772.

The protein belongs to the terpene synthase family. Tpsd subfamily. The cofactor is Mg(2+).

The catalysed reaction is (+)-copalyl diphosphate = (-)-pimara-8(14),15-diene + diphosphate. The protein operates within terpene metabolism; oleoresin biosynthesis. Involved in defensive oleoresin formation in conifers in response to insect attack or other injury. Involved in diterpene (C20) olefins biosynthesis. Monofunctional enzyme lacking the DXDD motif in the class II active site relevant for the cyclization of geranylgeranyl diphosphate (GGPP). Requires (+)-copalyl diphosphate ((+)-CPP) as substrate, but no activity with GGPP or ent-CPP. Pimaradiene is the major products of the enzyme. In Pinus banksiana (Jack pine), this protein is Monofunctional pimaradiene synthase.